The following is a 1331-amino-acid chain: ABC multidrug transporter MDR2 (1331 aa).

Basic and acidic residues-rich tracts occupy residues 1–20 (MVEV…KQEN) and 31–41 (SDKEKVAKKGN). The tract at residues 1 to 51 (MVEVSEKPNTQDDGVSKQENRNPASSSSSTSDKEKVAKKGNSDATKSSTPE) is disordered. 4 helical membrane passes run 93-113 (MIFL…LPLF), 147-167 (YFVY…VGFI), 219-239 (KVGL…IGYV), and 242-262 (WKLA…MGGI). In terms of domain architecture, ABC transmembrane type-1 1 spans 97 to 387 (AIVSLASIAA…VAPNTQAFAS (291 aa)). A glycan (N-linked (GlcNAc...) asparagine) is linked at Asn293. 2 helical membrane-spanning segments follow: residues 325–345 (LGIM…LGFW) and 358–378 (LSAI…IGNV). In terms of domain architecture, ABC transporter 1 spans 422–667 (IEFRGIKHIY…KGTYLQLVEA (246 aa)). 457–464 (GPSGSGKS) is a binding site for ATP. Asn529 carries N-linked (GlcNAc...) asparagine glycosylation. 2 helical membrane-spanning segments follow: residues 762 to 782 (LCGF…SVFF) and 810 to 830 (FLML…IFAI). The ABC transmembrane type-1 2 domain occupies 764–1051 (GFFFAVLSGA…VFSFSPDMGK (288 aa)). N-linked (GlcNAc...) asparagine glycosylation is present at Asn860. A run of 4 helical transmembrane segments spans residues 884–904 (LGTI…ALAF), 910–930 (LVCI…FWIL), 995–1015 (ASQS…GGLL), and 1025–1045 (FFLC…VFSF). In terms of domain architecture, ABC transporter 2 spans 1086 to 1324 (IEFRDVHFRY…KGRYYELVHM (239 aa)). N-linked (GlcNAc...) asparagine glycosylation occurs at Asn1108. 1121–1128 (GPSGCGKS) provides a ligand contact to ATP.

This sequence belongs to the ABC transporter superfamily. ABCB family. Multidrug resistance exporter (TC 3.A.1.201) subfamily.

Its subcellular location is the cell membrane. The catalysed reaction is itraconazole(in) + ATP + H2O = itraconazole(out) + ADP + phosphate + H(+). In terms of biological role, pleiotropic ABC efflux transporter that may be involved in the modulation susceptibility to a wide range of unrelated cytotoxic compounds, including terbinafine, 4-nitroquinoline N-oxide, and ethidium bromide. May play a role in pathogenicity. The chain is ABC multidrug transporter MDR2 from Trichophyton interdigitale (strain MR816).